Here is a 730-residue protein sequence, read N- to C-terminus: Replication restart protein PriA (730 aa).

One can recognise a Helicase ATP-binding domain in the interval 212 to 378 (LLFHSGFNVW…QNGKYQHLVL (167 aa)). 225-232 (GVTGSGKT) is an ATP binding site. The short motif at 321–324 (DEEH) is the DEAH box element. Zn(2+)-binding residues include C437, C440, C446, C449, C464, C467, C477, and C480. In terms of domain architecture, Helicase C-terminal spans 472 to 640 (TIPRQCGDCG…LPPFTFQALI (169 aa)).

The protein belongs to the helicase family. PriA subfamily. As to quaternary structure, component of the replication restart primosome. Zn(2+) serves as cofactor.

The enzyme catalyses Couples ATP hydrolysis with the unwinding of duplex DNA by translocating in the 3'-5' direction.. It catalyses the reaction ATP + H2O = ADP + phosphate + H(+). Initiates the restart of stalled replication forks, which reloads the replicative helicase on sites other than the origin of replication. Recognizes and binds to abandoned replication forks and remodels them to uncover a helicase loading site. Promotes assembly of the primosome at these replication forks. The protein is Replication restart protein PriA of Haemophilus influenzae (strain ATCC 51907 / DSM 11121 / KW20 / Rd).